Reading from the N-terminus, the 324-residue chain is Glyoxylate/hydroxypyruvate reductase B (324 aa).

Residues R237 and E266 contribute to the active site. Catalysis depends on H285, which acts as the Proton donor.

It belongs to the D-isomer specific 2-hydroxyacid dehydrogenase family. GhrB subfamily. Homodimer.

It localises to the cytoplasm. It carries out the reaction glycolate + NADP(+) = glyoxylate + NADPH + H(+). It catalyses the reaction (R)-glycerate + NAD(+) = 3-hydroxypyruvate + NADH + H(+). The enzyme catalyses (R)-glycerate + NADP(+) = 3-hydroxypyruvate + NADPH + H(+). Functionally, catalyzes the NADPH-dependent reduction of glyoxylate and hydroxypyruvate into glycolate and glycerate, respectively. In Salmonella choleraesuis (strain SC-B67), this protein is Glyoxylate/hydroxypyruvate reductase B.